Consider the following 429-residue polypeptide: tRNA(Ile2) 2-agmatinylcytidine synthetase TiaS (429 aa).

The OB DNA-binding region spans Val271–Pro343.

This sequence belongs to the TiaS family.

The protein localises to the cytoplasm. The enzyme catalyses cytidine(34) in tRNA(Ile2) + agmatine + ATP + H2O = 2-agmatinylcytidine(34) in tRNA(Ile2) + AMP + 2 phosphate + 2 H(+). Functionally, ATP-dependent agmatine transferase that catalyzes the formation of 2-agmatinylcytidine (agm2C) at the wobble position (C34) of tRNA(Ile2), converting the codon specificity from AUG to AUA. This is tRNA(Ile2) 2-agmatinylcytidine synthetase TiaS from Thermococcus sibiricus (strain DSM 12597 / MM 739).